The following is a 345-amino-acid chain: UPF0284 protein STK_21430 (345 aa).

The protein belongs to the UPF0284 family.

This is UPF0284 protein STK_21430 from Sulfurisphaera tokodaii (strain DSM 16993 / JCM 10545 / NBRC 100140 / 7) (Sulfolobus tokodaii).